The following is a 112-amino-acid chain: Cytochrome c-551 (112 aa).

The signal sequence occupies residues 1–20; it reads MKSKLSILMIGFALSVLLAA. Cysteine 21 is lipidated: N-palmitoyl cysteine. The S-diacylglycerol cysteine moiety is linked to residue cysteine 21. Over residues 25-35 the composition is skewed to basic and acidic residues; that stretch reads DAKEEKTDTGS. Residues 25 to 44 form a disordered region; the sequence is DAKEEKTDTGSKTEATASEG. Positions 39–112 constitute a Cytochrome c domain; the sequence is ATASEGEELY…VIAKWLSEKK (74 aa). Residues cysteine 52, cysteine 55, histidine 56, and methionine 91 each coordinate heme c.

In terms of processing, binds 1 heme c group covalently per subunit.

The protein resides in the cell membrane. Electron carrier protein. The sequence is that of Cytochrome c-551 (cccB) from Bacillus subtilis (strain 168).